The following is a 423-amino-acid chain: Cytochrome b mRNA maturase bI2 (423 aa).

The Mitochondrial matrix portion of the chain corresponds to 1–31 (MAFRKSNVYLSLVNSYIIDSPQPSSINYWWN). The tract at residues 1–143 (MAFRKSNVYL…CVYGQMSHWG (143 aa)) is cytochrome b. The chain crosses the membrane as a helical span at residues 32-52 (MGSLLGLCLVIQIVTGIFMAM). Residues 53–84 (HYSSNIELAFSSVEHIMRDVHNGYILRYLHAN) are Mitochondrial intermembrane-facing. The chain crosses the membrane as a helical span at residues 85 to 105 (GASFFFMVMFMHMAKGLYYGS). The Mitochondrial matrix segment spans residues 106–115 (YRSPRVTLWN). The chain crosses the membrane as a helical span at residues 116–136 (VGVIIFILTIATAFLGYCCVY). Over 137–153 (GQMSHWGNMNIASNMFN) the chain is Mitochondrial intermembrane. The interval 144–423 (NMNIASNMFN…SMKYKLGNYL (280 aa)) is maturase. A helical transmembrane segment spans residues 154 to 174 (MMKTIYMMMLMLLIYIFYTIM). The Mitochondrial matrix segment spans residues 175–423 (MRQMMKTKEY…SMKYKLGNYL (249 aa)).

This sequence in the N-terminal section; belongs to the cytochrome b family. In the C-terminal section; belongs to the LAGLIDADG endonuclease family.

Its subcellular location is the mitochondrion inner membrane. Functionally, this protein is responsible for splicing and maturation of cytochrome b mRNA. Specifically, it may be responsible for the splicing specificity of the second intron. This is Cytochrome b mRNA maturase bI2 (BI2) from Saccharomyces cerevisiae (strain ATCC 204508 / S288c) (Baker's yeast).